The following is a 371-amino-acid chain: Photosynthetic reaction center cytochrome c subunit (371 aa).

Positions 114, 127, 130, 131, 153, 167, 178, 181, 182, 267, 278, 281, 282, 339, 342, and 343 each coordinate heme.

As to quaternary structure, component of the photosynthetic reaction center composed of protein subunits L (PufL), M (PufM), H (PuhA) and cytochrome C (PufC). The reaction center interacts with light-harvesting antenna complex LH1. Post-translationally, binds 4 heme groups per subunit.

It is found in the cellular chromatophore membrane. Functionally, the reaction center of purple bacteria contains a tightly bound cytochrome molecule which re-reduces the photo oxidized primary electron donor. The chain is Photosynthetic reaction center cytochrome c subunit (pufC) from Roseobacter denitrificans (strain ATCC 33942 / OCh 114) (Erythrobacter sp. (strain OCh 114)).